A 428-amino-acid polypeptide reads, in one-letter code: Forkhead box protein B2 (428 aa).

The fork-head DNA-binding region spans 12-103 (QKPPYSYISL…GDMFENGSFL (92 aa)). Disordered stretches follow at residues 118-217 (HLHS…MQEA) and 408-428 (PTAA…LVHS). Over residues 136–163 (LHPHHPHHAHHHHHHHHHAAHHHHHHHP) the composition is skewed to basic residues. 2 stretches are compositionally biased toward pro residues: residues 164–174 (PQPPPPPPPHM) and 183–192 (APAPQPPHLP). Low complexity predominate over residues 193–217 (SQPAQQPQPQSQPPQTSHPGKMQEA).

It localises to the nucleus. Functionally, transcription factor. The polypeptide is Forkhead box protein B2 (Foxb2) (Mus musculus (Mouse)).